The following is a 69-amino-acid chain: Putative membrane protein insertion efficiency factor (69 aa).

It belongs to the UPF0161 family.

Its subcellular location is the cell membrane. In terms of biological role, could be involved in insertion of integral membrane proteins into the membrane. This chain is Putative membrane protein insertion efficiency factor, found in Clostridium perfringens (strain SM101 / Type A).